Reading from the N-terminus, the 66-residue chain is Ribosome biogenesis protein Nop10 (66 aa).

It belongs to the NOP10 family.

In terms of biological role, involved in ribosome biogenesis; more specifically in 18S rRNA pseudouridylation and in cleavage of pre-rRNA. In Staphylothermus marinus (strain ATCC 43588 / DSM 3639 / JCM 9404 / F1), this protein is Ribosome biogenesis protein Nop10.